The sequence spans 234 residues: Leucyl/phenylalanyl-tRNA--protein transferase (234 aa).

It belongs to the L/F-transferase family.

It is found in the cytoplasm. It carries out the reaction N-terminal L-lysyl-[protein] + L-leucyl-tRNA(Leu) = N-terminal L-leucyl-L-lysyl-[protein] + tRNA(Leu) + H(+). It catalyses the reaction N-terminal L-arginyl-[protein] + L-leucyl-tRNA(Leu) = N-terminal L-leucyl-L-arginyl-[protein] + tRNA(Leu) + H(+). The enzyme catalyses L-phenylalanyl-tRNA(Phe) + an N-terminal L-alpha-aminoacyl-[protein] = an N-terminal L-phenylalanyl-L-alpha-aminoacyl-[protein] + tRNA(Phe). In terms of biological role, functions in the N-end rule pathway of protein degradation where it conjugates Leu, Phe and, less efficiently, Met from aminoacyl-tRNAs to the N-termini of proteins containing an N-terminal arginine or lysine. In Pseudoalteromonas atlantica (strain T6c / ATCC BAA-1087), this protein is Leucyl/phenylalanyl-tRNA--protein transferase.